Here is a 371-residue protein sequence, read N- to C-terminus: Putative glutamate--cysteine ligase 2 (371 aa).

This sequence belongs to the glutamate--cysteine ligase type 2 family. YbdK subfamily.

The catalysed reaction is L-cysteine + L-glutamate + ATP = gamma-L-glutamyl-L-cysteine + ADP + phosphate + H(+). ATP-dependent carboxylate-amine ligase which exhibits weak glutamate--cysteine ligase activity. The protein is Putative glutamate--cysteine ligase 2 of Burkholderia thailandensis (strain ATCC 700388 / DSM 13276 / CCUG 48851 / CIP 106301 / E264).